Consider the following 315-residue polypeptide: 4-hydroxy-3-methylbut-2-enyl diphosphate reductase (315 aa).

[4Fe-4S] cluster is bound at residue C12. The (2E)-4-hydroxy-3-methylbut-2-enyl diphosphate site is built by H41 and H74. Residues H41 and H74 each contribute to the dimethylallyl diphosphate site. The isopentenyl diphosphate site is built by H41 and H74. Residue C96 participates in [4Fe-4S] cluster binding. H124 contributes to the (2E)-4-hydroxy-3-methylbut-2-enyl diphosphate binding site. Position 124 (H124) interacts with dimethylallyl diphosphate. Residue H124 coordinates isopentenyl diphosphate. The active-site Proton donor is E126. T168 lines the (2E)-4-hydroxy-3-methylbut-2-enyl diphosphate pocket. Position 198 (C198) interacts with [4Fe-4S] cluster. (2E)-4-hydroxy-3-methylbut-2-enyl diphosphate is bound by residues S226, S227, N228, and S270. The dimethylallyl diphosphate site is built by S226, S227, N228, and S270. Residues S226, S227, N228, and S270 each coordinate isopentenyl diphosphate.

It belongs to the IspH family. Requires [4Fe-4S] cluster as cofactor.

The enzyme catalyses isopentenyl diphosphate + 2 oxidized [2Fe-2S]-[ferredoxin] + H2O = (2E)-4-hydroxy-3-methylbut-2-enyl diphosphate + 2 reduced [2Fe-2S]-[ferredoxin] + 2 H(+). It carries out the reaction dimethylallyl diphosphate + 2 oxidized [2Fe-2S]-[ferredoxin] + H2O = (2E)-4-hydroxy-3-methylbut-2-enyl diphosphate + 2 reduced [2Fe-2S]-[ferredoxin] + 2 H(+). It participates in isoprenoid biosynthesis; dimethylallyl diphosphate biosynthesis; dimethylallyl diphosphate from (2E)-4-hydroxy-3-methylbutenyl diphosphate: step 1/1. The protein operates within isoprenoid biosynthesis; isopentenyl diphosphate biosynthesis via DXP pathway; isopentenyl diphosphate from 1-deoxy-D-xylulose 5-phosphate: step 6/6. In terms of biological role, catalyzes the conversion of 1-hydroxy-2-methyl-2-(E)-butenyl 4-diphosphate (HMBPP) into a mixture of isopentenyl diphosphate (IPP) and dimethylallyl diphosphate (DMAPP). Acts in the terminal step of the DOXP/MEP pathway for isoprenoid precursor biosynthesis. The sequence is that of 4-hydroxy-3-methylbut-2-enyl diphosphate reductase from Azotobacter vinelandii (strain DJ / ATCC BAA-1303).